A 109-amino-acid polypeptide reads, in one-letter code: Heterogeneous nuclear ribonucleoprotein-like protein HD40 (109 aa).

Positions 1–36 (EEVSNGQEHTEGMXQGEXNXIXVEEHHEGEKNSHLV) are disordered. The segment covering 23–36 (VEEHHEGEKNSHLV) has biased composition (basic and acidic residues). The RRM domain maps to 40–50 (EEKKLFVGALS). Asymmetric dimethylarginine is present on residues Arg102 and Arg105.

The protein resides in the cytoplasm. The protein localises to the nucleus. The polypeptide is Heterogeneous nuclear ribonucleoprotein-like protein HD40 (Artemia salina (Brine shrimp)).